Here is a 398-residue protein sequence, read N- to C-terminus: Isopenicillin N epimerase (398 aa).

Lys217 carries the post-translational modification N6-(pyridoxal phosphate)lysine.

It belongs to the class-V pyridoxal-phosphate-dependent aminotransferase family. It depends on pyridoxal 5'-phosphate as a cofactor.

It catalyses the reaction isopenicillin N = penicillin N. It participates in antibiotic biosynthesis; cephalosporin C biosynthesis. Its function is as follows. Catalyzes the reversible isomerization between isopenicillin N and penicillin N. The chain is Isopenicillin N epimerase (cefD) from Streptomyces clavuligerus.